We begin with the raw amino-acid sequence, 348 residues long: Phenylalanine--tRNA ligase alpha subunit (348 aa).

Glutamate 259 serves as a coordination point for Mg(2+).

Belongs to the class-II aminoacyl-tRNA synthetase family. Phe-tRNA synthetase alpha subunit type 1 subfamily. Tetramer of two alpha and two beta subunits. Mg(2+) serves as cofactor.

Its subcellular location is the cytoplasm. It catalyses the reaction tRNA(Phe) + L-phenylalanine + ATP = L-phenylalanyl-tRNA(Phe) + AMP + diphosphate + H(+). In Levilactobacillus brevis (strain ATCC 367 / BCRC 12310 / CIP 105137 / JCM 1170 / LMG 11437 / NCIMB 947 / NCTC 947) (Lactobacillus brevis), this protein is Phenylalanine--tRNA ligase alpha subunit.